Here is a 305-residue protein sequence, read N- to C-terminus: Peroxisome biogenesis factor 2 (305 aa).

Topologically, residues 1-15 (MAAREESTQSANRVL) are peroxisomal matrix. Residues 16–42 (RISQLDALELNKALEQLVWSQFTQCFH) form a helical membrane-spanning segment. Residues 43-48 (GFKPGL) lie on the Cytoplasmic side of the membrane. The chain crosses the membrane as a helical span at residues 49–74 (LARFEPEVKAFLWLFLWRFTIYSKNA). The Peroxisomal matrix portion of the chain corresponds to 75 to 98 (TVGQSVLNIQHKNDSSPNPVYQPP). A helical membrane pass occupies residues 99–125 (SKNQKLLYAVCTIGGRWLEERCYDLFR). Residues 126 to 133 (NRHLASFG) lie on the Cytoplasmic side of the membrane. Residues 134–160 (KAKQCMNFVVGLLKLGELMNFLIFLQK) traverse the membrane as a helical segment. Residues 161-187 (GKFATLTERLLGIHSVFCKPQNMREVG) lie on the Peroxisomal matrix side of the membrane. The chain crosses the membrane as a helical span at residues 188–211 (FEYMNRELLWHGFAEFLIFLLPLI). Residues 212–305 (NIQKLKAKLS…GIQMSEVNAL (94 aa)) are Cytoplasmic-facing. Zn(2+) is bound by residues Cys244, Cys247, Cys259, His261, Cys264, Cys267, Cys280, and Cys283. The RING-type zinc-finger motif lies at 244–284 (CALCGEWPTMPHTIGCEHVFCYYCVKSSFLFDIYFTCPKCG).

Belongs to the pex2/pex10/pex12 family. In terms of assembly, component of the PEX2-PEX10-PEX12 retrotranslocation channel, composed of PEX2, PEX10 and PEX12. Forms intramolecular and intermolecular disulfide bonds in response to reactive oxygen species (ROS), promoting higher stability.

The protein resides in the peroxisome membrane. The enzyme catalyses [E2 ubiquitin-conjugating enzyme]-S-ubiquitinyl-L-cysteine + [acceptor protein]-L-cysteine = [E2 ubiquitin-conjugating enzyme]-L-cysteine + [acceptor protein]-S-ubiquitinyl-L-cysteine.. It catalyses the reaction S-ubiquitinyl-[E2 ubiquitin-conjugating enzyme]-L-cysteine + [acceptor protein]-L-lysine = [E2 ubiquitin-conjugating enzyme]-L-cysteine + N(6)-ubiquitinyl-[acceptor protein]-L-lysine.. Its pathway is protein modification; protein ubiquitination. Functionally, E3 ubiquitin-protein ligase component of a retrotranslocation channel required for peroxisome organization by mediating export of the PEX5 receptor from peroxisomes to the cytosol, thereby promoting PEX5 recycling. The retrotranslocation channel is composed of PEX2, PEX10 and PEX12; each subunit contributing transmembrane segments that coassemble into an open channel that specifically allows the passage of PEX5 through the peroxisomal membrane. PEX2 also regulates peroxisome organization by acting as a E3 ubiquitin-protein ligase. PEX2 ubiquitinates PEX5 during its passage through the retrotranslocation channel: catalyzes monoubiquitination of PEX5 at 'Cys-11', a modification that acts as a signal for PEX5 extraction into the cytosol. Required for pexophagy in response to starvation by mediating ubiquitination of peroxisomal proteins, such as PEX5 and ABCD3/PMP70. Also involved in the response to reactive oxygen species (ROS) by mediating 'Lys-48'-linked polyubiquitination and subsequent degradation of PNPLA2/ATGL, thereby regulating lipolysis. This chain is Peroxisome biogenesis factor 2, found in Mus musculus (Mouse).